The primary structure comprises 413 residues: Serine hydroxymethyltransferase (413 aa).

Residues L117 and 121 to 123 (GHL) contribute to the (6S)-5,6,7,8-tetrahydrofolate site. The residue at position 226 (K226) is an N6-(pyridoxal phosphate)lysine. (6S)-5,6,7,8-tetrahydrofolate is bound by residues E239 and 349 to 351 (SPF).

The protein belongs to the SHMT family. Homodimer. The cofactor is pyridoxal 5'-phosphate.

The protein localises to the cytoplasm. It catalyses the reaction (6R)-5,10-methylene-5,6,7,8-tetrahydrofolate + glycine + H2O = (6S)-5,6,7,8-tetrahydrofolate + L-serine. The protein operates within one-carbon metabolism; tetrahydrofolate interconversion. Its pathway is amino-acid biosynthesis; glycine biosynthesis; glycine from L-serine: step 1/1. Its function is as follows. Catalyzes the reversible interconversion of serine and glycine with tetrahydrofolate (THF) serving as the one-carbon carrier. This reaction serves as the major source of one-carbon groups required for the biosynthesis of purines, thymidylate, methionine, and other important biomolecules. Also exhibits THF-independent aldolase activity toward beta-hydroxyamino acids, producing glycine and aldehydes, via a retro-aldol mechanism. The sequence is that of Serine hydroxymethyltransferase from Bacillus cytotoxicus (strain DSM 22905 / CIP 110041 / 391-98 / NVH 391-98).